Here is a 290-residue protein sequence, read N- to C-terminus: uncharacterized protein (290 aa).

Belongs to the UreD family.

It is found in the cytoplasm. The protein resides in the nucleus. Probably facilitates nickel incorporation. This is an uncharacterized protein from Schizosaccharomyces pombe (strain 972 / ATCC 24843) (Fission yeast).